We begin with the raw amino-acid sequence, 263 residues long: Shikimate dehydrogenase (NADP(+)) (263 aa).

Residues 21–23 and threonine 67 each bind shikimate; that span reads TLS. Lysine 71 serves as the catalytic Proton acceptor. Residue glutamate 83 participates in NADP(+) binding. Positions 92 and 103 each coordinate shikimate. NADP(+) contacts are provided by residues 126-130 and leucine 204; that span reads GAGGA. Tyrosine 206 is a binding site for shikimate. Residue glycine 227 coordinates NADP(+).

The protein belongs to the shikimate dehydrogenase family. In terms of assembly, homodimer.

It carries out the reaction shikimate + NADP(+) = 3-dehydroshikimate + NADPH + H(+). It participates in metabolic intermediate biosynthesis; chorismate biosynthesis; chorismate from D-erythrose 4-phosphate and phosphoenolpyruvate: step 4/7. Involved in the biosynthesis of the chorismate, which leads to the biosynthesis of aromatic amino acids. Catalyzes the reversible NADPH linked reduction of 3-dehydroshikimate (DHSA) to yield shikimate (SA). This chain is Shikimate dehydrogenase (NADP(+)), found in Sulfolobus acidocaldarius (strain ATCC 33909 / DSM 639 / JCM 8929 / NBRC 15157 / NCIMB 11770).